A 352-amino-acid polypeptide reads, in one-letter code: C-C chemokine receptor type 5 (352 aa).

Topologically, residues 1–30 (MDYQVSSPIYDIDYGPSEPCRKIDVKQMGA) are extracellular. Sulfotyrosine is present on tyrosine 3. 2 O-linked (GalNAc...) serine glycosylation sites follow: serine 6 and serine 7. Residues tyrosine 10 and tyrosine 14 each carry the sulfotyrosine modification. 2 disulfide bridges follow: cysteine 20–cysteine 269 and cysteine 101–cysteine 178. Residues 31–58 (HLLPPLYSMVFLFGFVGNMLVVLILINC) traverse the membrane as a helical segment. The Cytoplasmic portion of the chain corresponds to 59–68 (KRLKSMTDIY). The helical transmembrane segment at 69-89 (LLNLAISDLIFLFTVPFWAHY) threads the bilayer. The Extracellular segment spans residues 90–102 (AAGQWDFGNTMCQ). The helical transmembrane segment at 103–124 (FLTGLYFIGFFSGIFFIILLTI) threads the bilayer. Residues 125–141 (DRYLAIVHAVFALKART) lie on the Cytoplasmic side of the membrane. The chain crosses the membrane as a helical span at residues 142-166 (VTFGVVTSVITWVVAVFASLPGIIF). Residues 167–198 (TRSQKEGYHYTCSPHFPFSQYQFWKNFETLKM) are Extracellular-facing. A helical membrane pass occupies residues 199–218 (VILGLVLPLLVMVICYSGIL). Topologically, residues 219–235 (KTLLRCRNEKKRHRAVR) are cytoplasmic. A helical transmembrane segment spans residues 236 to 260 (LIFTIMIVYFLFWAPYNIVLLLNTY). At 261–277 (QEFFGLNNCSSSNRLDQ) the chain is on the extracellular side. The helical transmembrane segment at 278 to 301 (AMQVTETLGMTHCCVNPIIYAFVG) threads the bilayer. The Cytoplasmic portion of the chain corresponds to 302–352 (EKFRNYLKVFFQKHIAKCFCECCSIFQKEAPERANSVYTRSTGEQEISVGL). Residues cysteine 321, cysteine 323, and cysteine 324 are each lipidated (S-palmitoyl cysteine). Phosphoserine; by BARK1 occurs at positions 337, 342, and 349.

The protein belongs to the G-protein coupled receptor 1 family. Interacts with PRAF2. Efficient ligand binding to CCL3/MIP-1alpha and CCL4/MIP-1beta requires sulfation, O-glycosylation and sialic acid modifications. Glycosylation on Ser-6 is required for efficient binding of CCL4. Interacts with GRK2. Interacts with ARRB1 and ARRB2. Interacts with CNIH4. Interacts with S100A4; this interaction stimulates T-lymphocyte chemotaxis. Post-translationally, sulfated on at least 2 of the N-terminal tyrosines. Sulfation is required for efficient binding of the chemokines, CCL3 and CCL4. In terms of processing, palmitoylation in the C-terminal is important for cell surface expression. Phosphorylation on serine residues in the C-terminal is stimulated by binding CC chemokines especially by APO-RANTES. Post-translationally, O-glycosylated, but not N-glycosylated. Ser-6 appears to be the major site even if Ser-7 may be also O-glycosylated. Also sialylated glycans present which contribute to chemokine binding. Ser-17 may also be glycosylated and, if so, with small moieties such as a T-antigen.

Its subcellular location is the cell membrane. Receptor for a number of inflammatory CC-chemokines including CCL3/MIP-1-alpha, CCL4/MIP-1-beta and RANTES and subsequently transduces a signal by increasing the intracellular calcium ion level. May play a role in the control of granulocytic lineage proliferation or differentiation. Participates in T-lymphocyte migration to the infection site by acting as a chemotactic receptor. The sequence is that of C-C chemokine receptor type 5 (CCR5) from Mico humeralifer (Black and white tassel-ear marmoset).